Consider the following 232-residue polypeptide: Small ribosomal subunit protein uS3 (232 aa).

A KH type-2 domain is found at 39 to 107; that stretch reads IREILHKELK…DVVINIVEIR (69 aa).

The protein belongs to the universal ribosomal protein uS3 family. Part of the 30S ribosomal subunit. Forms a tight complex with proteins S10 and S14.

Functionally, binds the lower part of the 30S subunit head. Binds mRNA in the 70S ribosome, positioning it for translation. The polypeptide is Small ribosomal subunit protein uS3 (Rhodopseudomonas palustris (strain HaA2)).